The sequence spans 419 residues: UDP-N-acetylglucosamine 1-carboxyvinyltransferase (419 aa).

22–23 (KN) contributes to the phosphoenolpyruvate binding site. Residue Arg93 participates in UDP-N-acetyl-alpha-D-glucosamine binding. The Proton donor role is filled by Cys117. Position 117 is a 2-(S-cysteinyl)pyruvic acid O-phosphothioketal (Cys117). UDP-N-acetyl-alpha-D-glucosamine is bound by residues Asp307 and Ile329.

Belongs to the EPSP synthase family. MurA subfamily.

Its subcellular location is the cytoplasm. The catalysed reaction is phosphoenolpyruvate + UDP-N-acetyl-alpha-D-glucosamine = UDP-N-acetyl-3-O-(1-carboxyvinyl)-alpha-D-glucosamine + phosphate. Its pathway is cell wall biogenesis; peptidoglycan biosynthesis. Functionally, cell wall formation. Adds enolpyruvyl to UDP-N-acetylglucosamine. The sequence is that of UDP-N-acetylglucosamine 1-carboxyvinyltransferase from Shewanella sediminis (strain HAW-EB3).